A 229-amino-acid chain; its full sequence is Transmembrane emp24 domain-containing protein 5 (229 aa).

A signal peptide spans Met-1–Gly-27. The Lumenal portion of the chain corresponds to Phe-28–Asn-196. Positions Lys-45–Leu-126 constitute a GOLD domain. The helical transmembrane segment at Phe-197–Leu-217 threads the bilayer. At Lys-218–Thr-229 the chain is on the cytoplasmic side.

This sequence belongs to the EMP24/GP25L family. As to quaternary structure, interacts with TMED9 and TMED10.

It is found in the endoplasmic reticulum membrane. Its subcellular location is the golgi apparatus. The protein resides in the cis-Golgi network membrane. It localises to the endoplasmic reticulum-Golgi intermediate compartment membrane. Its function is as follows. Potential role in vesicular protein trafficking, mainly in the early secretory pathway. Required for the maintenance of the Golgi apparatus; involved in protein exchange between Golgi stacks during assembly. Probably not required for COPI-vesicle-mediated retrograde transport. This Rattus norvegicus (Rat) protein is Transmembrane emp24 domain-containing protein 5 (Tmed5).